A 548-amino-acid polypeptide reads, in one-letter code: Chaperonin GroEL (548 aa).

Residues 30-33 (TLGP), Lys51, 87-91 (DGTTT), Gly415, and Asp495 each bind ATP.

The protein belongs to the chaperonin (HSP60) family. As to quaternary structure, forms a cylinder of 14 subunits composed of two heptameric rings stacked back-to-back. Interacts with the co-chaperonin GroES.

Its subcellular location is the cytoplasm. It carries out the reaction ATP + H2O + a folded polypeptide = ADP + phosphate + an unfolded polypeptide.. In terms of biological role, together with its co-chaperonin GroES, plays an essential role in assisting protein folding. The GroEL-GroES system forms a nano-cage that allows encapsulation of the non-native substrate proteins and provides a physical environment optimized to promote and accelerate protein folding. In Yersinia pseudotuberculosis serotype O:1b (strain IP 31758), this protein is Chaperonin GroEL.